A 382-amino-acid chain; its full sequence is tRNA (guanine(26)-N(2))-dimethyltransferase (382 aa).

Residues 4 to 373 (VEIIEGKARI…KNLDEIKECI (370 aa)) enclose the Trm1 methyltransferase domain. Positions 44, 69, and 87 each coordinate S-adenosyl-L-methionine. Zn(2+) is bound by residues Cys-246, Cys-249, Cys-263, and Cys-266.

This sequence belongs to the class I-like SAM-binding methyltransferase superfamily. Trm1 family.

It catalyses the reaction guanosine(26) in tRNA + 2 S-adenosyl-L-methionine = N(2)-dimethylguanosine(26) in tRNA + 2 S-adenosyl-L-homocysteine + 2 H(+). In terms of biological role, dimethylates a single guanine residue at position 26 of a number of tRNAs using S-adenosyl-L-methionine as donor of the methyl groups. The protein is tRNA (guanine(26)-N(2))-dimethyltransferase of Sulfolobus acidocaldarius (strain ATCC 33909 / DSM 639 / JCM 8929 / NBRC 15157 / NCIMB 11770).